Consider the following 1100-residue polypeptide: ATP-dependent DNA helicase mph1 (1100 aa).

The segment covering 1–21 (MSDSDDYLQDDPDDQAFDDFA) has biased composition (acidic residues). The segment at 1 to 250 (MSDSDDYLQD…RPSSFMQSSN (250 aa)) is disordered. Low complexity predominate over residues 38 to 61 (RNQTRNTTSRRNEDNSVASDSDSF). The segment covering 84-94 (FADHPENEASS) has biased composition (basic and acidic residues). Polar residues predominate over residues 104 to 117 (NNPQENIFVTQLTQ). The span at 135-146 (PPPPPPPAPTKP) shows a compositional bias: pro residues. Polar residues-rich tracts occupy residues 182–191 (RLSFSTAQNS) and 200–209 (NAPTNTAQTE). Residues 212-223 (DFLDDIPDDAFD) show a composition bias toward acidic residues. Residues 237-249 (SNSSRPSSFMQSS) show a composition bias toward low complexity. The Helicase ATP-binding domain occupies 317-485 (ITQKGLFHNL…AVIDGLEISK (169 aa)). 330–337 (LPTGLGKT) serves as a coordination point for ATP. Positions 433 to 436 (DEAH) match the DEAH box motif. Positions 655 to 829 (YLKQVVLNHF…GTRFTFHDDK (175 aa)) constitute a Helicase C-terminal domain. 2 disordered regions span residues 850–913 (PEEN…PEPV) and 1003–1100 (RRPA…LGRR). 2 stretches are compositionally biased toward basic residues: residues 863-875 (RRGRVPKKPPKKF) and 1019-1028 (GNKKRLRKGR). Over residues 1053 to 1066 (QPISPEQLLSSFTD) the composition is skewed to polar residues. Residues 1082–1092 (LELDADFEAPD) are compositionally biased toward acidic residues.

The protein belongs to the DEAD box helicase family. DEAH subfamily. FANCM sub-subfamily. Interacts with the MHF histone-fold complex to form the FANCM-MHF complex.

The protein localises to the nucleus. It catalyses the reaction ATP + H2O = ADP + phosphate + H(+). Its function is as follows. ATP-dependent DNA helicase involved in DNA damage repair by homologous recombination and in genome maintenance. Capable of unwinding D-loops. Plays a role in limiting crossover recombinants during mitotic DNA double-strand break (DSB) repair. Component of a FANCM-MHF complex which promotes gene conversion at blocked replication forks, probably by reversal of the stalled fork. The protein is ATP-dependent DNA helicase mph1 of Aspergillus terreus (strain NIH 2624 / FGSC A1156).